Consider the following 459-residue polypeptide: Alcohol acyl transferase 1 allele GSd (459 aa).

Residues His-164 and Asn-385 each act as proton acceptor in the active site.

This sequence belongs to the plant acyltransferase family. As to expression, expressed at very low levels in the cortex and skin of ripe fruit.

Its function is as follows. Involved in the biosynthesis of volatile esters which confer ripe apple fruit flavor. Alcohol acyl transferase that can use a wide range of alcohols as substrate to produce esters. The chain is Alcohol acyl transferase 1 allele GSd from Malus domestica (Apple).